We begin with the raw amino-acid sequence, 208 residues long: Small ribosomal subunit protein uS4 (208 aa).

The region spanning 98–158 (GRLDNVVYRM…EKSKKQARIK (61 aa)) is the S4 RNA-binding domain.

It belongs to the universal ribosomal protein uS4 family. In terms of assembly, part of the 30S ribosomal subunit. Contacts protein S5. The interaction surface between S4 and S5 is involved in control of translational fidelity.

One of the primary rRNA binding proteins, it binds directly to 16S rRNA where it nucleates assembly of the body of the 30S subunit. Functionally, with S5 and S12 plays an important role in translational accuracy. This chain is Small ribosomal subunit protein uS4, found in Haemophilus ducreyi (strain 35000HP / ATCC 700724).